The primary structure comprises 369 residues: 4-hydroxy-3-methylbut-2-en-1-yl diphosphate synthase (flavodoxin) (369 aa).

4 residues coordinate [4Fe-4S] cluster: Cys-270, Cys-273, Cys-305, and Glu-312.

The protein belongs to the IspG family. The cofactor is [4Fe-4S] cluster.

It catalyses the reaction (2E)-4-hydroxy-3-methylbut-2-enyl diphosphate + oxidized [flavodoxin] + H2O + 2 H(+) = 2-C-methyl-D-erythritol 2,4-cyclic diphosphate + reduced [flavodoxin]. It functions in the pathway isoprenoid biosynthesis; isopentenyl diphosphate biosynthesis via DXP pathway; isopentenyl diphosphate from 1-deoxy-D-xylulose 5-phosphate: step 5/6. Its function is as follows. Converts 2C-methyl-D-erythritol 2,4-cyclodiphosphate (ME-2,4cPP) into 1-hydroxy-2-methyl-2-(E)-butenyl 4-diphosphate. The sequence is that of 4-hydroxy-3-methylbut-2-en-1-yl diphosphate synthase (flavodoxin) from Pseudomonas fluorescens (strain Pf0-1).